The primary structure comprises 161 residues: DNA-binding protein inhibitor ID-4 (161 aa).

In terms of domain architecture, bHLH spans 52-104; it reads AAEAAADEPALCLQCDMNDCYSRLRRLVPTIPPNKKVSKVEILQHVIDYILDL.

In terms of assembly, heterodimer with other HLH proteins.

The protein localises to the nucleus. In terms of biological role, transcriptional regulator (lacking a basic DNA binding domain) which negatively regulates the basic helix-loop-helix (bHLH) transcription factors by forming heterodimers and inhibiting their DNA binding and transcriptional activity. Implicated in regulating a variety of cellular processes, including cellular growth, senescence, differentiation, apoptosis, angiogenesis, and neoplastic transformation. In Mus musculus (Mouse), this protein is DNA-binding protein inhibitor ID-4 (Id4).